Consider the following 113-residue polypeptide: MAARLIAKIVFTSGTVLVRSIQMAYKQALLQAESGMGAAAGSMDVKSKMSPIEARKILGLENVETVSKEDIDKKYNELLTINDPKDGGSEYLQIKISGAKHCLHSALKEGKKI.

The interval 56-108 (KILGLENVETVSKEDIDKKYNELLTINDPKDGGSEYLQIKISGAKHCLHSALK) is J-like.

It belongs to the TIM16/PAM16 family. In terms of assembly, probable component of the PAM complex at least composed of a mitochondrial HSP70 protein, grepE, tim16 and tim14. Associates with the TIM23 complex.

The protein localises to the mitochondrion inner membrane. Regulates ATP-dependent protein translocation into the mitochondrial matrix. The sequence is that of Mitochondrial import inner membrane translocase subunit tim16 (timm16) from Dictyostelium discoideum (Social amoeba).